We begin with the raw amino-acid sequence, 430 residues long: MTSVVVVGTQWGDEGKGKITDFLSADAEVIARYQGGDNAGHTIVIDGKKFKLHLIPSGIFFPQKISVIGNGVVVNPKSLVKELAYLHDEGVTTDNLRISDRAHVILPYHIQLDQLQEDAKGDNKIGTTIKGIGPAYMDKAARVGIRIADLLDKDIFAERLRINLAEKNRLFEKMYDSTPLDFDAIFEEYYAYGQEIKQYVTDTSVILNDALDAGKRVLFEGAQGVMLDIDQGTYPFVTSSNPVAGGVTIGSGVGPNKINKVVGVCKAYTSRVGDGPFPTELFDEVGERIREVGHEYGTTTGRPRRVGWFDSVVMRHSRRVSGITNLSLNSIDVLSGLDTVKICVAYDLDGKRIDYYPANLEQLKRCKPIYEELPGWQEDITGVRSLDELPENARNYVRRVGELVGVRISTFSVGPGREQTNILESVWASI.

GTP contacts are provided by residues 12–18 (GDEGKGK) and 40–42 (GHT). Asp13 serves as the catalytic Proton acceptor. Asp13 and Gly40 together coordinate Mg(2+). Residues 13-16 (DEGK), 38-41 (NAGH), Thr128, Arg142, Gln223, Thr238, and Arg302 each bind IMP. The Proton donor role is filled by His41. Residue 298-304 (TTTGRPR) coordinates substrate. Residues Arg304, 330–332 (SID), and 412–414 (SVG) contribute to the GTP site.

The protein belongs to the adenylosuccinate synthetase family. As to quaternary structure, homodimer. The cofactor is Mg(2+).

The protein localises to the cytoplasm. It catalyses the reaction IMP + L-aspartate + GTP = N(6)-(1,2-dicarboxyethyl)-AMP + GDP + phosphate + 2 H(+). The protein operates within purine metabolism; AMP biosynthesis via de novo pathway; AMP from IMP: step 1/2. Plays an important role in the de novo pathway of purine nucleotide biosynthesis. Catalyzes the first committed step in the biosynthesis of AMP from IMP. In Streptococcus pyogenes serotype M1, this protein is Adenylosuccinate synthetase.